The chain runs to 109 residues: Ubiquitin-related modifier 1 homolog (109 aa).

Position 109 is a 1-thioglycine (Gly109). Gly109 participates in a covalent cross-link: Glycyl lysine isopeptide (Gly-Lys) (interchain with K-? in acceptor proteins).

The protein belongs to the URM1 family. C-terminal thiocarboxylation occurs in 2 steps, it is first acyl-adenylated (-COAMP) via the hesA/moeB/thiF part of the MOCS3 homolog, then thiocarboxylated (-COSH) via the rhodanese domain of the MOCS3 homolog.

It is found in the cytoplasm. Its pathway is tRNA modification; 5-methoxycarbonylmethyl-2-thiouridine-tRNA biosynthesis. Acts as a sulfur carrier required for 2-thiolation of mcm(5)S(2)U at tRNA wobble positions of cytosolic tRNA(Lys), tRNA(Glu) and tRNA(Gln). Serves as sulfur donor in tRNA 2-thiolation reaction by being thiocarboxylated (-COSH) at its C-terminus by MOCS3. The sulfur is then transferred to tRNA to form 2-thiolation of mcm(5)S(2)U. Also acts as a ubiquitin-like protein (UBL) that is covalently conjugated via an isopeptide bond to lysine residues of target proteins. The thiocarboxylated form serves as substrate for conjugation and oxidative stress specifically induces the formation of UBL-protein conjugates. The polypeptide is Ubiquitin-related modifier 1 homolog (Culex quinquefasciatus (Southern house mosquito)).